A 360-amino-acid chain; its full sequence is Outer membrane protein P2 (360 aa).

The N-terminal stretch at 1 to 20 (MKKTLAALIVGAFAASAANA) is a signal peptide.

The protein belongs to the Gram-negative porin family. Homotrimer.

The protein resides in the cell outer membrane. Its function is as follows. Forms pores that allow passive diffusion of small molecules across the outer membrane. The polypeptide is Outer membrane protein P2 (ompP2) (Haemophilus influenzae).